Reading from the N-terminus, the 1319-residue chain is Son of sevenless homolog 1 (1319 aa).

Positions 200-390 (TYYDLVKAFM…LNVQSGMEKI (191 aa)) constitute a DH domain. In terms of domain architecture, PH spans 444 to 548 (FIMEGTLTRV…AALISLQYRS (105 aa)). The region spanning 597–741 (GIPIIKAGTV…SITKIIQRKK (145 aa)) is the N-terminal Ras-GEF domain. The Ras-GEF domain occupies 780 to 1019 (HPIEIARQLT…FNKSLEIEPR (240 aa)). The tract at residues 1019-1101 (RHPKPLPRFP…ASGTSSNTDV (83 aa)) is disordered. Phosphoserine occurs at positions 1078 and 1082. Ser-1120 and Ser-1147 each carry phosphoserine; by RPS6KA3. A disordered region spans residues 1121–1319 (VSSISLSKGT…PPLLENAHSS (199 aa)). Ser-1164, Ser-1196, and Ser-1215 each carry phosphoserine. The span at 1194–1203 (PESPPLLPPR) shows a compositional bias: pro residues. Pro residues predominate over residues 1238 to 1250 (SPSPFTPPPPQTP). Position 1261 is a phosphoserine (Ser-1261). Residues 1296 to 1309 (YKREHTHPSMHRDG) are compositionally biased toward basic and acidic residues.

Interacts (via C-terminus) with GRB2 (via SH3 domain). Forms a complex with phosphorylated MUC1 and GRB2 (via its SH3 domains). Interacts with phosphorylated LAT2. Interacts with NCK1 and NCK2. Part of a complex consisting of ABI1, EPS8 and SOS1. Interacts (Ser-1120 and Ser-1147 phosphorylated form) with YWHAB and YWHAE. Phosphorylation at Ser-1120 and Ser-1147 by RPS6KA3 create YWHAB and YWHAE binding sites and which contribute to the negative regulation of EGF-induced MAPK1/3 phosphorylation. As to expression, expressed in most embryonic and adult tissues.

Functionally, promotes the exchange of Ras-bound GDP by GTP. Probably by promoting Ras activation, regulates phosphorylation of MAP kinase MAPK3 in response to EGF. Catalytic component of a trimeric complex that participates in transduction of signals from Ras to Rac by promoting the Rac-specific guanine nucleotide exchange factor (GEF) activity. The sequence is that of Son of sevenless homolog 1 (Sos1) from Mus musculus (Mouse).